A 23-amino-acid polypeptide reads, in one-letter code: Caerin-4.3 (23 aa).

In terms of tissue distribution, expressed by the skin parotoid and/or rostral glands.

Its subcellular location is the secreted. Functionally, antibacterial peptide, that adopts an alpha helical conformation which can disrupt bacterial membranes. Each caerin displays a different antimicrobial specificity. The chain is Caerin-4.3 from Ranoidea caerulea (Green tree frog).